A 71-amino-acid chain; its full sequence is SRY-related protein LG28 (71 aa).

Residues 1–68 constitute a DNA-binding region (HMG box); the sequence is VKRPMNAFMV…KHMADYPDYK (68 aa).

Its subcellular location is the nucleus. The polypeptide is SRY-related protein LG28 (Eublepharis macularius (Leopard gecko)).